Reading from the N-terminus, the 346-residue chain is Phosphate acyltransferase (346 aa).

Belongs to the PlsX family. In terms of assembly, homodimer. Probably interacts with PlsY.

It is found in the cytoplasm. The enzyme catalyses a fatty acyl-[ACP] + phosphate = an acyl phosphate + holo-[ACP]. It functions in the pathway lipid metabolism; phospholipid metabolism. Its function is as follows. Catalyzes the reversible formation of acyl-phosphate (acyl-PO(4)) from acyl-[acyl-carrier-protein] (acyl-ACP). This enzyme utilizes acyl-ACP as fatty acyl donor, but not acyl-CoA. The protein is Phosphate acyltransferase of Crocosphaera subtropica (strain ATCC 51142 / BH68) (Cyanothece sp. (strain ATCC 51142)).